Here is a 288-residue protein sequence, read N- to C-terminus: Intermediate transcription factor 3 small subunit (288 aa).

Belongs to the orthopoxvirus OPG134 family. In terms of assembly, heterodimer of a 45 kDa (A23R) and a 32 kDa (A8R) subunit to form the virus intermediate transcription factor (VITF)-3.

Acts with RNA polymerase to initiate transcription from intermediate gene promoters. The polypeptide is Intermediate transcription factor 3 small subunit (OPG134) (Homo sapiens (Human)).